The sequence spans 282 residues: Heme oxygenase 1, chloroplastic (282 aa).

Residues 1-56 (MASATVVSQIQSLYIIKPRLSPPPPPHRQFRSIYFPTTRLLQQHRFRQMKSVVIVP) constitute a chloroplast transit peptide. Residue His86 coordinates heme b.

The protein belongs to the heme oxygenase family. As to expression, highly expressed in root nodules and, to a lower extent, in leaves, shoots, roots, flowers and pods (at protein level).

It is found in the plastid. The protein localises to the chloroplast. The enzyme catalyses heme b + 3 reduced [NADPH--hemoprotein reductase] + 3 O2 = biliverdin IXalpha + CO + Fe(2+) + 3 oxidized [NADPH--hemoprotein reductase] + 3 H2O + H(+). In terms of biological role, key enzyme in the synthesis of the chromophore of the phytochrome family of plant photoreceptors. Catalyzes the opening of the heme ring to form the open-chain tetrapyrrole biliverdin IX with the release of iron and carbon monoxide (CO). Produces specifically the biliverdin IX-alpha isomer. Can form complex with heme, is ferredoxin-dependent and its activity is increased in the presence of ascorbate. May affect the plastid-to-nucleus signaling pathway by perturbing tetrapyrrole synthesis. The plastid-to-nucleus signal plays an important role in the coordinated expression of both nuclear- and chloroplast-localized genes that encode photosynthesis-related proteins. Required for efficient symbiotic nitrogen fixation (SNF) in root nodules. Responsible for heme catabolism in uninfected nodule interstitial cells (UC), preventing superoxide production under stressful conditions (e.g. nitrate exposure and darkness) and catalyzing biliverdin (BV) production in senescing green nodules. This Lotus japonicus (Lotus corniculatus var. japonicus) protein is Heme oxygenase 1, chloroplastic.